The following is an 839-amino-acid chain: MEADPKVPFTDEMNIQDEHNWESGSWSSSRRSNDSNVTLLSRRSSVEQHEDERQKDSDTLFEHGDAALDAQGIADPRLKDYPIPLVAQTVHLRNDDSEPILTFRVWLLSTFWVLAGCSISTVYYFKPFSVRLSGYVVQLCTWKMGQLLASALPTRPFTVLGRRWTLNPGRWSAKEHALVVIAYWGSSYTAYGLGPLSAMELFYGKRLSSPWAITFLVTTQLTGYGLVGLYRHILVRPPSMYYPGILPTVSLFNAMHGDPRQTASSLRVFMAIASAAFVYQWLPSFVFPLLSSLPLLCWVGRGSWEAFVLGSGSLGFGLMDFSLDWNYVAFLSPLFTPLWANANRFVGAALAVWITYPVAYFSDALGSLRFPPMSSETFDTSGGLYNVSRIMTPSLELNQTALELYSTPRWSFSYAMHFFWGFASASAMVTYAVLFHGRTILKALANVWSLDGNTADDIDSEKDPYVKLTSHHARVPQAWYALLLAVCLCLGTIQLYAGDMQLPWWGLQLVVAISALFTLPCGMLFATANVQIGMDYVSEVLAGALFPGRPVAVLTATVYGRQVLEQCLNLASDLKLGFYMKIPEWELLVAQVYGTLLGPFVNWAVMRLIIDTQGAAALLGREGGDGKRQGLGLGQGGGGGGGGGGQQQRAAGAHTTEWNALKTKNFFSSSVIWGVMGPARVFGGGDGSPSSSSPYRWLLPSGFAVGAAAVLLLWLIHKARPAWRVQQWPLHPAIIFHGASLFPVFPTTNLTSSMAAAVASMGVMRRWHPRWFARWNYLLGAGLDCGAQLVQMVLGVAFLVFNRHGQQMVRMPHWWGNDAVAVDQCFPPPDLPSVIMSPM.

The interval 1-58 is disordered; it reads MEADPKVPFTDEMNIQDEHNWESGSWSSSRRSNDSNVTLLSRRSSVEQHEDERQKDSD. The segment covering 23-36 has biased composition (low complexity); sequence SGSWSSSRRSNDSN. 2 N-linked (GlcNAc...) asparagine glycosylation sites follow: Asn33 and Asn36. The span at 44-58 shows a compositional bias: basic and acidic residues; the sequence is SSVEQHEDERQKDSD. 6 helical membrane-spanning segments follow: residues 105–125, 177–197, 210–230, 268–288, 315–335, and 345–365; these read VWLL…VYYF, ALVV…GPLS, PWAI…VGLY, VFMA…FVFP, GFGL…SPLF, and FVGA…SDAL. 2 N-linked (GlcNAc...) asparagine glycosylation sites follow: Asn386 and Asn398. Transmembrane regions (helical) follow at residues 415-435, 478-498, 505-525, and 585-605; these read AMHF…AVLF, AWYA…LYAG, WGLQ…GMLF, and WELL…NWAV. Over residues 629–646 the composition is skewed to gly residues; it reads QGLGLGQGGGGGGGGGGQ. The tract at residues 629–654 is disordered; the sequence is QGLGLGQGGGGGGGGGGQQQRAAGAH. The next 3 helical transmembrane spans lie at 665–685, 697–717, and 728–748; these read NFFS…FGGG, WLLP…WLIH, and WPLH…FPTT. The N-linked (GlcNAc...) asparagine glycan is linked to Asn749. Residues 781–801 form a helical membrane-spanning segment; that stretch reads AGLDCGAQLVQMVLGVAFLVF.

This sequence belongs to the oligopeptide OPT transporter family.

It is found in the membrane. Functionally, oligopeptide transporter; part of the gene cluster that mediates the biosynthesis of the phomopsins, a group of hexapeptide mycotoxins which infects lupins and causes lupinosis disease in livestock. The sequence is that of Oligopeptide transporter phomP2 from Diaporthe leptostromiformis (Lupinosis disease fungus).